Here is a 323-residue protein sequence, read N- to C-terminus: Ribose-phosphate pyrophosphokinase (323 aa).

Residues 38 to 40 and 96 to 97 each bind ATP; these read DGE and RQ. Mg(2+) contacts are provided by His130 and Asp170. Lys193 is an active-site residue. D-ribose 5-phosphate contacts are provided by residues Arg195, Asp219, and 223-227; that span reads DTAGT.

The protein belongs to the ribose-phosphate pyrophosphokinase family. Class I subfamily. As to quaternary structure, homohexamer. The cofactor is Mg(2+).

Its subcellular location is the cytoplasm. It catalyses the reaction D-ribose 5-phosphate + ATP = 5-phospho-alpha-D-ribose 1-diphosphate + AMP + H(+). It functions in the pathway metabolic intermediate biosynthesis; 5-phospho-alpha-D-ribose 1-diphosphate biosynthesis; 5-phospho-alpha-D-ribose 1-diphosphate from D-ribose 5-phosphate (route I): step 1/1. In terms of biological role, involved in the biosynthesis of the central metabolite phospho-alpha-D-ribosyl-1-pyrophosphate (PRPP) via the transfer of pyrophosphoryl group from ATP to 1-hydroxyl of ribose-5-phosphate (Rib-5-P). This chain is Ribose-phosphate pyrophosphokinase, found in Chlorobaculum tepidum (strain ATCC 49652 / DSM 12025 / NBRC 103806 / TLS) (Chlorobium tepidum).